We begin with the raw amino-acid sequence, 634 residues long: Glutamate--tRNA ligase (634 aa).

Residues 108–118 (PNPSGPLHIGH) carry the 'HIGH' region motif.

It belongs to the class-I aminoacyl-tRNA synthetase family. Glutamate--tRNA ligase type 2 subfamily.

The protein resides in the cytoplasm. The catalysed reaction is tRNA(Glu) + L-glutamate + ATP = L-glutamyl-tRNA(Glu) + AMP + diphosphate. Functionally, catalyzes the attachment of glutamate to tRNA(Glu) in a two-step reaction: glutamate is first activated by ATP to form Glu-AMP and then transferred to the acceptor end of tRNA(Glu). The polypeptide is Glutamate--tRNA ligase (Methanoregula boonei (strain DSM 21154 / JCM 14090 / 6A8)).